Here is a 118-residue protein sequence, read N- to C-terminus: UPF0125 protein RSc1426 (118 aa).

The protein belongs to the UPF0125 (RnfH) family.

The sequence is that of UPF0125 protein RSc1426 from Ralstonia nicotianae (strain ATCC BAA-1114 / GMI1000) (Ralstonia solanacearum).